The following is a 369-amino-acid chain: Ribonuclease D (369 aa).

One can recognise a 3'-5' exonuclease domain in the interval 4–168 (EIITTTAQLH…CLEKLQQQLE (165 aa)). An HRDC domain is found at 207–286 (DRQGLAIIKA…TQVISQDEST (80 aa)).

This sequence belongs to the RNase D family. A divalent metal cation serves as cofactor.

The protein localises to the cytoplasm. It catalyses the reaction Exonucleolytic cleavage that removes extra residues from the 3'-terminus of tRNA to produce 5'-mononucleotides.. Its function is as follows. Exonuclease involved in the 3' processing of various precursor tRNAs. Initiates hydrolysis at the 3'-terminus of an RNA molecule and releases 5'-mononucleotides. The protein is Ribonuclease D of Psychromonas ingrahamii (strain DSM 17664 / CCUG 51855 / 37).